Consider the following 188-residue polypeptide: MASYSTNDFKPGLKFIQDGEPCVIVENEFVKPGKGQAFTRTKIRKLISGKVLEINFKSGSTVEAADVVDYNYTYSYKDEDFWYFMHPETFEQISVDSKALGDNDKWLVDQAECIITLWNGSAIGVTPPNFVELEVIETDPGLKGDTAGTGGKPATLSTGAVVRVPLFVQIGEVIRVDTRSGEYVSRVK.

Position 34 is an N6-(3,6-diaminohexanoyl)-5-hydroxylysine (lysine 34).

It belongs to the elongation factor P family. Post-translationally, may be beta-lysylated on the epsilon-amino group of Lys-34 by the combined action of EpmA and EpmB, and then hydroxylated on the C5 position of the same residue by EpmC (if this protein is present). Lysylation is critical for the stimulatory effect of EF-P on peptide-bond formation. The lysylation moiety may extend toward the peptidyltransferase center and stabilize the terminal 3-CCA end of the tRNA. Hydroxylation of the C5 position on Lys-34 may allow additional potential stabilizing hydrogen-bond interactions with the P-tRNA.

Its subcellular location is the cytoplasm. The protein operates within protein biosynthesis; polypeptide chain elongation. Involved in peptide bond synthesis. Alleviates ribosome stalling that occurs when 3 or more consecutive Pro residues or the sequence PPG is present in a protein, possibly by augmenting the peptidyl transferase activity of the ribosome. Modification of Lys-34 is required for alleviation. This chain is Elongation factor P, found in Glaesserella parasuis serovar 5 (strain SH0165) (Haemophilus parasuis).